We begin with the raw amino-acid sequence, 290 residues long: MRIADKTVTRAILERHGFTFKKSFGQNFLTDTNILQKIVDTAEIDKGVNVIEIGPGIGALTEFLAENAAEVMAFEIDDRLIPILADTLARFDNVQVVNQDILKADLQTQIQAFKNPDLPIKVVANLPYYITTPILMHLIESKIPFAEFVVMMQKEVADRISAMPNTKAYGSLSIAVQYYMTAKVSFIVPRTVFVPAPNVDSVILKMVRRDQPVVSVQDEDFFFRVSKVAFVHRRKTLWNNLTSHFGKSEDTKAKLEKALEIAKIKPSIRGEALSIPDFASLADALKEVEI.

6 residues coordinate S-adenosyl-L-methionine: N27, L29, G54, E75, D100, and N125.

Belongs to the class I-like SAM-binding methyltransferase superfamily. rRNA adenine N(6)-methyltransferase family. RsmA subfamily.

The protein resides in the cytoplasm. It catalyses the reaction adenosine(1518)/adenosine(1519) in 16S rRNA + 4 S-adenosyl-L-methionine = N(6)-dimethyladenosine(1518)/N(6)-dimethyladenosine(1519) in 16S rRNA + 4 S-adenosyl-L-homocysteine + 4 H(+). Functionally, specifically dimethylates two adjacent adenosines (A1518 and A1519) in the loop of a conserved hairpin near the 3'-end of 16S rRNA in the 30S particle. May play a critical role in biogenesis of 30S subunits. This chain is Ribosomal RNA small subunit methyltransferase A, found in Streptococcus agalactiae serotype Ia (strain ATCC 27591 / A909 / CDC SS700).